We begin with the raw amino-acid sequence, 160 residues long: Nucleotide-binding protein PSHAa2277 (160 aa).

It belongs to the YajQ family.

Its function is as follows. Nucleotide-binding protein. The sequence is that of Nucleotide-binding protein PSHAa2277 from Pseudoalteromonas translucida (strain TAC 125).